A 59-amino-acid polypeptide reads, in one-letter code: Cortexin domain-containing 1 protein (59 aa).

A helical membrane pass occupies residues 17–37 (LTLACFVFLCLFLVVMIIRCA).

It is found in the membrane. The protein is Cortexin domain-containing 1 protein of Homo sapiens (Human).